The sequence spans 327 residues: MFDAAPIKKVSVVIPVYNEQESLPELIRRTTTACESLGKAWEILLIDDGSSDSSAELMVKASQEADSHIISILLNRNYGQHAAIMAGFSHVSGDLIITLDADLQNPPEEIPRLVAKADEGFDVVGTVRQNRQDSLFRKSASKIINLLIQRTTGKAMGDYGCMLRAYRRPIIDTMLRCHERSTFIPILANIFARRATEIPVHHAEREFGDSKYSFMRLINLMYDLVTCLTTTPLRLLSLLGSVIAIGGFSLSVLLIVLRLALGPQWAAEGVFMLFAVLFTFIGAQFIGMGLLGEYIGRIYNDVRARPRYFVQQVIYPESTPFTEESHQ.

Topologically, residues 1 to 235 are cytoplasmic; the sequence is MFDAAPIKKV…TCLTTTPLRL (235 aa). The helical transmembrane segment at 236–256 threads the bilayer; the sequence is LSLLGSVIAIGGFSLSVLLIV. At 257–269 the chain is on the periplasmic side; that stretch reads LRLALGPQWAAEG. Residues 270–290 form a helical membrane-spanning segment; it reads VFMLFAVLFTFIGAQFIGMGL. Residues 291 to 327 are Cytoplasmic-facing; sequence LGEYIGRIYNDVRARPRYFVQQVIYPESTPFTEESHQ.

It belongs to the glycosyltransferase 2 family.

It is found in the cell inner membrane. The enzyme catalyses UDP-4-deoxy-4-formamido-beta-L-arabinose + di-trans,octa-cis-undecaprenyl phosphate = 4-deoxy-4-formamido-alpha-L-arabinopyranosyl di-trans,octa-cis-undecaprenyl phosphate + UDP. It functions in the pathway glycolipid biosynthesis; 4-amino-4-deoxy-alpha-L-arabinose undecaprenyl phosphate biosynthesis; 4-amino-4-deoxy-alpha-L-arabinose undecaprenyl phosphate from UDP-4-deoxy-4-formamido-beta-L-arabinose and undecaprenyl phosphate: step 1/2. The protein operates within bacterial outer membrane biogenesis; lipopolysaccharide biosynthesis. Its function is as follows. Catalyzes the transfer of 4-deoxy-4-formamido-L-arabinose from UDP to undecaprenyl phosphate. The modified arabinose is attached to lipid A and is required for resistance to polymyxin and cationic antimicrobial peptides. This chain is Undecaprenyl-phosphate 4-deoxy-4-formamido-L-arabinose transferase, found in Salmonella agona (strain SL483).